We begin with the raw amino-acid sequence, 803 residues long: Phosphoribosylformylglycinamidine synthase subunit PurL (803 aa).

His65 is an active-site residue. ATP-binding residues include Tyr68 and Lys107. Glu109 serves as a coordination point for Mg(2+). Residues Ser110–His113 and Arg132 each bind substrate. The Proton acceptor role is filled by His111. Asp133 provides a ligand contact to Mg(2+). Gln256 contributes to the substrate binding site. Residue Asp284 participates in Mg(2+) binding. Glu328 to Gln330 contacts substrate. Residues Asn537 and Gly574 each contribute to the ATP site. Asn575 provides a ligand contact to Mg(2+). A substrate-binding site is contributed by Ser577.

The protein belongs to the FGAMS family. Monomer. Part of the FGAM synthase complex composed of 1 PurL, 1 PurQ and 2 PurS subunits.

The protein localises to the cytoplasm. It catalyses the reaction N(2)-formyl-N(1)-(5-phospho-beta-D-ribosyl)glycinamide + L-glutamine + ATP + H2O = 2-formamido-N(1)-(5-O-phospho-beta-D-ribosyl)acetamidine + L-glutamate + ADP + phosphate + H(+). The protein operates within purine metabolism; IMP biosynthesis via de novo pathway; 5-amino-1-(5-phospho-D-ribosyl)imidazole from N(2)-formyl-N(1)-(5-phospho-D-ribosyl)glycinamide: step 1/2. Part of the phosphoribosylformylglycinamidine synthase complex involved in the purines biosynthetic pathway. Catalyzes the ATP-dependent conversion of formylglycinamide ribonucleotide (FGAR) and glutamine to yield formylglycinamidine ribonucleotide (FGAM) and glutamate. The FGAM synthase complex is composed of three subunits. PurQ produces an ammonia molecule by converting glutamine to glutamate. PurL transfers the ammonia molecule to FGAR to form FGAM in an ATP-dependent manner. PurS interacts with PurQ and PurL and is thought to assist in the transfer of the ammonia molecule from PurQ to PurL. The protein is Phosphoribosylformylglycinamidine synthase subunit PurL of Prochlorococcus marinus (strain NATL2A).